A 483-amino-acid chain; its full sequence is RNA-binding protein Nova-1 (483 aa).

Residues 1–44 are disordered; it reads MMAAAPIQQNGTHTGVPIDLDPPDSRKRPLEAPPEAGSTKRTNT. Residues 27–43 carry the Bipartite nuclear localization signal motif; the sequence is KRPLEAPPEAGSTKRTN. KH domains lie at 49–116, 147–213, and 397–464; these read QYFL…HGFI, IKQV…VELI, and KDVV…QYLI. The segment at 395 to 479 is required for RNA binding; that stretch reads GSKDVVEIAV…YEQGVRAANP (85 aa).

In terms of assembly, interacts with PTBP2; the interaction is direct.

It is found in the nucleus. Its function is as follows. Functions to regulate alternative splicing in neurons by binding pre-mRNA in a sequence-specific manner to activate exon inclusion or exclusion. It binds specifically to the sequences 5'-YCAY-3' and regulates splicing in only a subset of regulated exons. Binding to an exonic 5'-YCAY-3' cluster changes the protein complexes assembled on pre-mRNA, blocking U1 snRNP binding and exon inclusion, whereas binding to an intronic 5'-YCAY-3' cluster enhances spliceosome assembly and exon inclusion. Binding to 5'-YCAY-3' clusters results in a local and asymmetric action to regulate spliceosome assembly and alternative splicing in neurons. Binding to an exonic 5'-YCAY-3' cluster changed the protein complexes assembled on pre-mRNA, blocking U1 snRNP (small nuclear ribonucleoprotein) binding and exon inclusion, whereas binding to an intronic 5'-YCAY-3' cluster enhanced spliceosome assembly and exon inclusion. With NOVA1, they perform unique biological functions in different brain areas and cell types. Autoregulates its own expression by acting as a splicing repressor. Acts to activate the inclusion of exon E3A in the glycine receptor alpha-2 chain and of exon E9 in gamma-aminobutyric-acid receptor gamma-2 subunit via a distal downstream UCAU-rich intronic splicing enhancer. Acts to regulate a novel glycine receptor alpha-2 chain splice variant (alpha-2N) in developing spinal cord. This Macaca fascicularis (Crab-eating macaque) protein is RNA-binding protein Nova-1 (NOVA1).